The primary structure comprises 369 residues: Choline-phosphate cytidylyltransferase B (369 aa).

The segment at 1–27 (MPVVTTDAESETGIPKSLSNEPPSETM) is disordered. Isoleucine 84, phenylalanine 85, histidine 92, and lysine 122 together coordinate CTP. Phosphocholine is bound by residues lysine 122 and tryptophan 151. 7 residues coordinate CTP: histidine 168, aspartate 169, tyrosine 173, glutamine 195, arginine 196, threonine 197, and isoleucine 200. Positions 309 to 369 (RMLQALSPKQ…SMSEGDEDEK (61 aa)) are disordered. Serine 315, serine 319, serine 322, serine 323, serine 329, serine 331, and serine 335 each carry phosphoserine. Positions 319 to 339 (SPVSSPTRSRSPSRSPSPTFS) are enriched in low complexity. Residue threonine 345 is modified to Phosphothreonine. Phosphoserine occurs at positions 346, 349, 350, 355, 360, and 362. The segment covering 351 to 362 (PKAASASISSMS) has biased composition (low complexity).

This sequence belongs to the cytidylyltransferase family. Homodimer. Phosphorylated. Post-translationally, extensively phosphorylated. Highly expressed in testis, placenta, brain, ovary, liver and fetal lung. In terms of tissue distribution, expressed in brain, liver and fetal lung.

It is found in the cytoplasm. The protein localises to the endoplasmic reticulum. It carries out the reaction phosphocholine + CTP + H(+) = CDP-choline + diphosphate. Its pathway is phospholipid metabolism; phosphatidylcholine biosynthesis; phosphatidylcholine from phosphocholine: step 1/2. Functionally, catalyzes the key rate-limiting step in the CDP-choline pathway for phosphatidylcholine biosynthesis. This Homo sapiens (Human) protein is Choline-phosphate cytidylyltransferase B (PCYT1B).